The chain runs to 251 residues: Ubiquinone/menaquinone biosynthesis C-methyltransferase UbiE (251 aa).

Residues Thr-74, Asp-95, 123 to 124, and Ser-140 each bind S-adenosyl-L-methionine; that span reads NA.

Belongs to the class I-like SAM-binding methyltransferase superfamily. MenG/UbiE family.

The catalysed reaction is a 2-demethylmenaquinol + S-adenosyl-L-methionine = a menaquinol + S-adenosyl-L-homocysteine + H(+). It carries out the reaction a 2-methoxy-6-(all-trans-polyprenyl)benzene-1,4-diol + S-adenosyl-L-methionine = a 5-methoxy-2-methyl-3-(all-trans-polyprenyl)benzene-1,4-diol + S-adenosyl-L-homocysteine + H(+). It participates in quinol/quinone metabolism; menaquinone biosynthesis; menaquinol from 1,4-dihydroxy-2-naphthoate: step 2/2. It functions in the pathway cofactor biosynthesis; ubiquinone biosynthesis. In terms of biological role, methyltransferase required for the conversion of demethylmenaquinol (DMKH2) to menaquinol (MKH2) and the conversion of 2-polyprenyl-6-methoxy-1,4-benzoquinol (DDMQH2) to 2-polyprenyl-3-methyl-6-methoxy-1,4-benzoquinol (DMQH2). This Enterobacter sp. (strain 638) protein is Ubiquinone/menaquinone biosynthesis C-methyltransferase UbiE.